The sequence spans 703 residues: Methionine--tRNA ligase (703 aa).

A 'HIGH' region motif is present at residues 12 to 22 (PYANGPLHIGH). Zn(2+) is bound by residues cysteine 143, cysteine 146, cysteine 156, and cysteine 159. The short motif at 331–335 (KMSKT) is the 'KMSKS' region element. Lysine 334 serves as a coordination point for ATP. 2 stretches are compositionally biased toward low complexity: residues 556 to 568 (AAPQ…PAKG) and 577 to 594 (EAPA…AAES). 2 disordered regions span residues 556–594 (AAPQ…AAES) and 682–703 (GPGG…SEVK). One can recognise a tRNA-binding domain in the interval 602–703 (DFAKVVLKAG…GDVAPGSEVK (102 aa)).

The protein belongs to the class-I aminoacyl-tRNA synthetase family. MetG type 1 subfamily. As to quaternary structure, homodimer. It depends on Zn(2+) as a cofactor.

Its subcellular location is the cytoplasm. The enzyme catalyses tRNA(Met) + L-methionine + ATP = L-methionyl-tRNA(Met) + AMP + diphosphate. Functionally, is required not only for elongation of protein synthesis but also for the initiation of all mRNA translation through initiator tRNA(fMet) aminoacylation. In Myxococcus xanthus (strain DK1622), this protein is Methionine--tRNA ligase.